Reading from the N-terminus, the 253-residue chain is Imidazole glycerol phosphate synthase subunit HisF (253 aa).

Residues Asp-11 and Asp-130 contribute to the active site.

This sequence belongs to the HisA/HisF family. As to quaternary structure, heterodimer of HisH and HisF.

The protein resides in the cytoplasm. It catalyses the reaction 5-[(5-phospho-1-deoxy-D-ribulos-1-ylimino)methylamino]-1-(5-phospho-beta-D-ribosyl)imidazole-4-carboxamide + L-glutamine = D-erythro-1-(imidazol-4-yl)glycerol 3-phosphate + 5-amino-1-(5-phospho-beta-D-ribosyl)imidazole-4-carboxamide + L-glutamate + H(+). It functions in the pathway amino-acid biosynthesis; L-histidine biosynthesis; L-histidine from 5-phospho-alpha-D-ribose 1-diphosphate: step 5/9. Functionally, IGPS catalyzes the conversion of PRFAR and glutamine to IGP, AICAR and glutamate. The HisF subunit catalyzes the cyclization activity that produces IGP and AICAR from PRFAR using the ammonia provided by the HisH subunit. The protein is Imidazole glycerol phosphate synthase subunit HisF of Acidithiobacillus ferrooxidans (strain ATCC 23270 / DSM 14882 / CIP 104768 / NCIMB 8455) (Ferrobacillus ferrooxidans (strain ATCC 23270)).